The sequence spans 852 residues: Chitin synthase 1 (852 aa).

Disordered stretches follow at residues 27–46 (EDQD…TNYA) and 53–97 (SSLR…QANG). The segment covering 53–74 (SSLRSQKSANKPTTAQNRNSAA) has biased composition (polar residues). 7 helical membrane-spanning segments follow: residues 492–509 (RWLN…IHFR), 532–552 (VISL…FYFI), 572–592 (IFDF…ICSM), 601–621 (FLFM…LFCS), 686–706 (FLPY…YAFC), 787–807 (THLV…ITTS), and 830–850 (CGLG…GIFT).

The protein belongs to the chitin synthase family. Class II subfamily.

It is found in the cell membrane. It carries out the reaction [(1-&gt;4)-N-acetyl-beta-D-glucosaminyl](n) + UDP-N-acetyl-alpha-D-glucosamine = [(1-&gt;4)-N-acetyl-beta-D-glucosaminyl](n+1) + UDP + H(+). Its function is as follows. Polymerizes chitin, a structural polymer of the cell wall and septum, by transferring the sugar moiety of UDP-GlcNAc to the non-reducing end of the growing chitin polymer. The polypeptide is Chitin synthase 1 (CHS1) (Mucor circinelloides f. lusitanicus (Mucor racemosus var. lusitanicus)).